A 207-amino-acid polypeptide reads, in one-letter code: Fibroblast growth factor 18 (207 aa).

Positions 1 to 27 (MYSAPSACTCLCLHFLLLCFQVQVLAA) are cleaved as a signal peptide. N-linked (GlcNAc...) asparagine glycosylation is present at Asn39. A disulfide bridge connects residues Cys109 and Cys127. An N-linked (GlcNAc...) asparagine glycan is attached at Asn137.

This sequence belongs to the heparin-binding growth factors family. In terms of assembly, interacts with FGFR3 and FGFR4.

It localises to the secreted. In terms of biological role, plays an important role in the regulation of cell proliferation, cell differentiation and cell migration. Required for normal ossification and bone development. Stimulates hepatic and intestinal proliferation. This chain is Fibroblast growth factor 18 (Fgf18), found in Mus musculus (Mouse).